The following is a 365-amino-acid chain: Putative agmatine deiminase (365 aa).

Cys356 acts as the Amidino-cysteine intermediate in catalysis.

This sequence belongs to the agmatine deiminase family.

It catalyses the reaction agmatine + H2O = N-carbamoylputrescine + NH4(+). The chain is Putative agmatine deiminase from Latilactobacillus sakei subsp. sakei (strain 23K) (Lactobacillus sakei subsp. sakei).